The following is a 274-amino-acid chain: 4-hydroxy-3-methylbut-2-enyl diphosphate reductase (274 aa).

A [4Fe-4S] cluster-binding site is contributed by Cys12. Positions 36 and 70 each coordinate (2E)-4-hydroxy-3-methylbut-2-enyl diphosphate. Dimethylallyl diphosphate contacts are provided by His36 and His70. Isopentenyl diphosphate contacts are provided by His36 and His70. Residue Cys92 coordinates [4Fe-4S] cluster. His120 contacts (2E)-4-hydroxy-3-methylbut-2-enyl diphosphate. A dimethylallyl diphosphate-binding site is contributed by His120. Residue His120 coordinates isopentenyl diphosphate. Catalysis depends on Glu122, which acts as the Proton donor. A (2E)-4-hydroxy-3-methylbut-2-enyl diphosphate-binding site is contributed by Thr158. Cys186 is a [4Fe-4S] cluster binding site. Residues Ser214, Ser215, Asn216, and Ser258 each contribute to the (2E)-4-hydroxy-3-methylbut-2-enyl diphosphate site. Residues Ser214, Ser215, Asn216, and Ser258 each coordinate dimethylallyl diphosphate. The isopentenyl diphosphate site is built by Ser214, Ser215, Asn216, and Ser258.

This sequence belongs to the IspH family. [4Fe-4S] cluster serves as cofactor.

The enzyme catalyses isopentenyl diphosphate + 2 oxidized [2Fe-2S]-[ferredoxin] + H2O = (2E)-4-hydroxy-3-methylbut-2-enyl diphosphate + 2 reduced [2Fe-2S]-[ferredoxin] + 2 H(+). The catalysed reaction is dimethylallyl diphosphate + 2 oxidized [2Fe-2S]-[ferredoxin] + H2O = (2E)-4-hydroxy-3-methylbut-2-enyl diphosphate + 2 reduced [2Fe-2S]-[ferredoxin] + 2 H(+). The protein operates within isoprenoid biosynthesis; dimethylallyl diphosphate biosynthesis; dimethylallyl diphosphate from (2E)-4-hydroxy-3-methylbutenyl diphosphate: step 1/1. It participates in isoprenoid biosynthesis; isopentenyl diphosphate biosynthesis via DXP pathway; isopentenyl diphosphate from 1-deoxy-D-xylulose 5-phosphate: step 6/6. Its function is as follows. Catalyzes the conversion of 1-hydroxy-2-methyl-2-(E)-butenyl 4-diphosphate (HMBPP) into a mixture of isopentenyl diphosphate (IPP) and dimethylallyl diphosphate (DMAPP). Acts in the terminal step of the DOXP/MEP pathway for isoprenoid precursor biosynthesis. The polypeptide is 4-hydroxy-3-methylbut-2-enyl diphosphate reductase (Helicobacter pylori (strain Shi470)).